A 354-amino-acid polypeptide reads, in one-letter code: Ferrochelatase (354 aa).

Fe cation contacts are provided by histidine 204 and glutamate 306.

The protein belongs to the ferrochelatase family.

The protein localises to the cytoplasm. It catalyses the reaction heme b + 2 H(+) = protoporphyrin IX + Fe(2+). The protein operates within porphyrin-containing compound metabolism; protoheme biosynthesis; protoheme from protoporphyrin-IX: step 1/1. Functionally, catalyzes the ferrous insertion into protoporphyrin IX. This chain is Ferrochelatase, found in Coxiella burnetii (strain Dugway 5J108-111).